Reading from the N-terminus, the 400-residue chain is Probable peptidoglycan D,D-transpeptidase PenA (400 aa).

Residues 1–21 (NIDGKGQEGLELSREDSLRGE) are disordered. The active-site Acyl-ester intermediate is the Ser-128.

The protein belongs to the transpeptidase family. FtsI subfamily.

It is found in the cell inner membrane. It carries out the reaction Preferential cleavage: (Ac)2-L-Lys-D-Ala-|-D-Ala. Also transpeptidation of peptidyl-alanyl moieties that are N-acyl substituents of D-alanine.. The protein operates within cell wall biogenesis; peptidoglycan biosynthesis. Functionally, catalyzes cross-linking of the peptidoglycan cell wall at the division septum. In Neisseria flavescens, this protein is Probable peptidoglycan D,D-transpeptidase PenA.